The primary structure comprises 244 residues: tRNA (guanine-N(1)-)-methyltransferase (244 aa).

Residues G112 and L131–L136 each bind S-adenosyl-L-methionine. A disordered region spans residues I211–K244.

The protein belongs to the RNA methyltransferase TrmD family. Homodimer.

The protein resides in the cytoplasm. It catalyses the reaction guanosine(37) in tRNA + S-adenosyl-L-methionine = N(1)-methylguanosine(37) in tRNA + S-adenosyl-L-homocysteine + H(+). Functionally, specifically methylates guanosine-37 in various tRNAs. The protein is tRNA (guanine-N(1)-)-methyltransferase of Trichormus variabilis (strain ATCC 29413 / PCC 7937) (Anabaena variabilis).